The following is a 256-amino-acid chain: Probable fructose-2,6-bisphosphatase TIGAR A (256 aa).

H11 serves as the catalytic Tele-phosphohistidine intermediate. The Proton donor/acceptor role is filled by E89. Residues 147–170 (HQDKVQDGGTSSADESTEAPAGLA) are disordered.

The protein belongs to the phosphoglycerate mutase family.

The protein resides in the cytoplasm. It localises to the nucleus. Its subcellular location is the mitochondrion. The catalysed reaction is beta-D-fructose 2,6-bisphosphate + H2O = beta-D-fructose 6-phosphate + phosphate. Fructose-bisphosphatase hydrolyzing fructose-2,6-bisphosphate as well as fructose-1,6-bisphosphate. Acts as a negative regulator of glycolysis by lowering intracellular levels of fructose-2,6-bisphosphate in a p53/TP53-dependent manner, resulting in the pentose phosphate pathway (PPP) activation and NADPH production. Contributes to the generation of reduced glutathione to cause a decrease in intracellular reactive oxygen species (ROS) content, correlating with its ability to protect cells from oxidative or metabolic stress-induced cell death. May play a role in mitophagy inhibition. The polypeptide is Probable fructose-2,6-bisphosphatase TIGAR A (Danio rerio (Zebrafish)).